Here is a 318-residue protein sequence, read N- to C-terminus: uncharacterized protein (318 aa).

To E.coli YfaT and P.aeruginosa PA4490.

This is an uncharacterized protein from Thermotoga maritima (strain ATCC 43589 / DSM 3109 / JCM 10099 / NBRC 100826 / MSB8).